The chain runs to 92 residues: Large ribosomal subunit protein bL36m (92 aa).

Residues 1–54 (MASLGRKFFAVGVLSRVFPSAFNAQKGLLKNASMFLTPAFRLSPSLLPWNFSRG) constitute a mitochondrion transit peptide.

Belongs to the bacterial ribosomal protein bL36 family. As to quaternary structure, component of the mitochondrial large ribosomal subunit (mt-LSU). Mature yeast 74S mitochondrial ribosomes consist of a small (37S) and a large (54S) subunit. The 37S small subunit contains a 15S ribosomal RNA (15S mt-rRNA) and at least 32 different proteins. The 54S large subunit contains a 21S rRNA (21S mt-rRNA) and at least 45 different proteins. bL36m has a zinc binding site.

The protein resides in the mitochondrion. Component of the mitochondrial ribosome (mitoribosome), a dedicated translation machinery responsible for the synthesis of mitochondrial genome-encoded proteins, including at least some of the essential transmembrane subunits of the mitochondrial respiratory chain. The mitoribosomes are attached to the mitochondrial inner membrane and translation products are cotranslationally integrated into the membrane. bL36m may be involved in a process influencing telomere capping. The polypeptide is Large ribosomal subunit protein bL36m (rtc6) (Schizosaccharomyces pombe (strain 972 / ATCC 24843) (Fission yeast)).